The following is a 143-amino-acid chain: uncharacterized protein (143 aa).

It localises to the mitochondrion. This is an uncharacterized protein from Arabidopsis thaliana (Mouse-ear cress).